The chain runs to 286 residues: 33 kDa chaperonin (286 aa).

Disulfide bonds link C225/C227 and C258/C261.

Belongs to the HSP33 family. Under oxidizing conditions two disulfide bonds are formed involving the reactive cysteines. Under reducing conditions zinc is bound to the reactive cysteines and the protein is inactive.

The protein localises to the cytoplasm. Functionally, redox regulated molecular chaperone. Protects both thermally unfolding and oxidatively damaged proteins from irreversible aggregation. Plays an important role in the bacterial defense system toward oxidative stress. The chain is 33 kDa chaperonin from Shewanella loihica (strain ATCC BAA-1088 / PV-4).